We begin with the raw amino-acid sequence, 127 residues long: Large ribosomal subunit protein bL12 (127 aa).

Belongs to the bacterial ribosomal protein bL12 family. In terms of assembly, homodimer. Part of the ribosomal stalk of the 50S ribosomal subunit. Forms a multimeric L10(L12)X complex, where L10 forms an elongated spine to which 2 to 4 L12 dimers bind in a sequential fashion. Binds GTP-bound translation factors.

Its function is as follows. Forms part of the ribosomal stalk which helps the ribosome interact with GTP-bound translation factors. Is thus essential for accurate translation. The polypeptide is Large ribosomal subunit protein bL12 (Symbiobacterium thermophilum (strain DSM 24528 / JCM 14929 / IAM 14863 / T)).